Here is a 325-residue protein sequence, read N- to C-terminus: L-lactate dehydrogenase (325 aa).

Residues Val-21, Asp-42, Lys-47, Tyr-73, and 87 to 88 (GA) each bind NAD(+). Substrate is bound by residues Gln-90, Arg-96, and 128-131 (NPVD). NAD(+)-binding positions include 126–128 (ATN) and Ser-151. Position 156–159 (156–159 (DTAR)) interacts with substrate. Beta-D-fructose 1,6-bisphosphate is bound by residues Arg-161 and His-176. Catalysis depends on His-183, which acts as the Proton acceptor. Tyr-228 carries the phosphotyrosine modification. Thr-237 provides a ligand contact to substrate.

This sequence belongs to the LDH/MDH superfamily. LDH family. In terms of assembly, homotetramer.

The protein resides in the cytoplasm. It carries out the reaction (S)-lactate + NAD(+) = pyruvate + NADH + H(+). It functions in the pathway fermentation; pyruvate fermentation to lactate; (S)-lactate from pyruvate: step 1/1. Its activity is regulated as follows. Allosterically activated by fructose 1,6-bisphosphate (FBP). Functionally, catalyzes the conversion of lactate to pyruvate. This chain is L-lactate dehydrogenase, found in Shouchella clausii (strain KSM-K16) (Alkalihalobacillus clausii).